The chain runs to 227 residues: NADH-quinone oxidoreductase subunit C (227 aa).

This sequence belongs to the complex I 30 kDa subunit family. NDH-1 is composed of 14 different subunits. Subunits NuoB, C, D, E, F, and G constitute the peripheral sector of the complex.

It localises to the cell inner membrane. The catalysed reaction is a quinone + NADH + 5 H(+)(in) = a quinol + NAD(+) + 4 H(+)(out). Functionally, NDH-1 shuttles electrons from NADH, via FMN and iron-sulfur (Fe-S) centers, to quinones in the respiratory chain. The immediate electron acceptor for the enzyme in this species is believed to be ubiquinone. Couples the redox reaction to proton translocation (for every two electrons transferred, four hydrogen ions are translocated across the cytoplasmic membrane), and thus conserves the redox energy in a proton gradient. The polypeptide is NADH-quinone oxidoreductase subunit C (Legionella pneumophila subsp. pneumophila (strain Philadelphia 1 / ATCC 33152 / DSM 7513)).